The chain runs to 155 residues: Putative pre-16S rRNA nuclease (155 aa).

Belongs to the YqgF nuclease family.

It localises to the cytoplasm. In terms of biological role, could be a nuclease involved in processing of the 5'-end of pre-16S rRNA. This chain is Putative pre-16S rRNA nuclease, found in Novosphingobium aromaticivorans (strain ATCC 700278 / DSM 12444 / CCUG 56034 / CIP 105152 / NBRC 16084 / F199).